We begin with the raw amino-acid sequence, 642 residues long: uncharacterized protein (642 aa).

The Cytoplasmic portion of the chain corresponds to 1 to 15 (MVHITLGQAIWVSVK). Residues 16–36 (PIIKIYLIIGVGFLMAKMGIL) form a helical membrane-spanning segment. The Extracellular portion of the chain corresponds to 37–42 (TVEATR). Residues 43-63 (IISDIVLTVLLPSLSFNKIVA) traverse the membrane as a helical segment. At 64–73 (NIEDKDIKSV) the chain is on the cytoplasmic side. A helical membrane pass occupies residues 74–94 (GIICLSALLIFGSGFFFAYVV). The Extracellular segment spans residues 95-104 (RLFLPVPKQW). Residues 105 to 125 (YGGILAGGMFPNISDLPIAYL) form a helical membrane-spanning segment. The Cytoplasmic portion of the chain corresponds to 126–142 (QSMDQGLVFSEEEGNKG). A helical transmembrane segment spans residues 143-163 (VANVIIFLTMFLICIFNLGGF). Residues 164-460 (RLIESDFEYN…FLKNCLRPCS (297 aa)) lie on the Extracellular side of the membrane. Disordered stretches follow at residues 183–206 (ETTK…RFFS) and 227–324 (GTKG…SQPR). 2 stretches are compositionally biased toward polar residues: residues 240–260 (RRST…NSKI) and 272–312 (IACT…SSID). A helical membrane pass occupies residues 461–481 (MAVIIALTVAFIPWVKALFVT). At 482-499 (TANTPHISQAPDNAPPLS) the chain is on the cytoplasmic side. A helical membrane pass occupies residues 500–520 (FFMDFTGYVGAACVPFGLILL). Over 521–538 (GATLGRLKIGNLYPGFWK) the chain is Extracellular. The chain crosses the membrane as a helical span at residues 539 to 559 (AAVTLVILRQCVMPIFGVLWC). The Cytoplasmic segment spans residues 560 to 574 (DRLVKAGWVNWQDDR). The chain crosses the membrane as a helical span at residues 575–595 (MLLFVIAISWNLPTMTTLIYF). The Extracellular segment spans residues 596–614 (TASFTPPETTAPIQMECVS). The helical transmembrane segment at 615 to 635 (FFLMLQYPLMVVSLPFLVSYF) threads the bilayer. At 636-642 (LKVQMNL) the chain is on the cytoplasmic side.

The protein belongs to the auxin efflux carrier (TC 2.A.69) family.

It localises to the membrane. This is an uncharacterized protein from Saccharomyces cerevisiae (strain ATCC 204508 / S288c) (Baker's yeast).